A 167-amino-acid chain; its full sequence is Regulator of sigma D (167 aa).

Belongs to the Rsd/AlgQ family. In terms of assembly, interacts with RpoD.

The protein localises to the cytoplasm. Functionally, binds RpoD and negatively regulates RpoD-mediated transcription activation by preventing the interaction between the primary sigma factor RpoD with the catalytic core of the RNA polymerase and with promoter DNA. May be involved in replacement of the RNA polymerase sigma subunit from RpoD to RpoS during the transition from exponential growth to the stationary phase. This chain is Regulator of sigma D, found in Yersinia enterocolitica serotype O:8 / biotype 1B (strain NCTC 13174 / 8081).